We begin with the raw amino-acid sequence, 100 residues long: Small ribosomal subunit protein uS14c (100 aa).

Belongs to the universal ribosomal protein uS14 family. Part of the 30S ribosomal subunit.

The protein resides in the plastid. The protein localises to the chloroplast. Binds 16S rRNA, required for the assembly of 30S particles. This is Small ribosomal subunit protein uS14c from Bigelowiella natans (Pedinomonas minutissima).